Consider the following 788-residue polypeptide: Glycerol-3-phosphate acyltransferase (788 aa).

Positions 104-135 are disordered; the sequence is LLPGRDPYHPNPRQQRRILRSDPQRARVMAGE. Residues 271–276 carry the HXXXXD motif motif; it reads SHRSYI.

Belongs to the GPAT/DAPAT family.

It localises to the cell membrane. The catalysed reaction is sn-glycerol 3-phosphate + an acyl-CoA = a 1-acyl-sn-glycero-3-phosphate + CoA. The protein operates within phospholipid metabolism; CDP-diacylglycerol biosynthesis; CDP-diacylglycerol from sn-glycerol 3-phosphate: step 1/3. The protein is Glycerol-3-phosphate acyltransferase of Mycobacterium marinum (strain ATCC BAA-535 / M).